A 569-amino-acid polypeptide reads, in one-letter code: Proline--tRNA ligase (569 aa).

Belongs to the class-II aminoacyl-tRNA synthetase family. ProS type 1 subfamily. As to quaternary structure, homodimer.

The protein localises to the cytoplasm. The catalysed reaction is tRNA(Pro) + L-proline + ATP = L-prolyl-tRNA(Pro) + AMP + diphosphate. Functionally, catalyzes the attachment of proline to tRNA(Pro) in a two-step reaction: proline is first activated by ATP to form Pro-AMP and then transferred to the acceptor end of tRNA(Pro). As ProRS can inadvertently accommodate and process non-cognate amino acids such as alanine and cysteine, to avoid such errors it has two additional distinct editing activities against alanine. One activity is designated as 'pretransfer' editing and involves the tRNA(Pro)-independent hydrolysis of activated Ala-AMP. The other activity is designated 'posttransfer' editing and involves deacylation of mischarged Ala-tRNA(Pro). The misacylated Cys-tRNA(Pro) is not edited by ProRS. The chain is Proline--tRNA ligase from Dehalococcoides mccartyi (strain ATCC BAA-2266 / KCTC 15142 / 195) (Dehalococcoides ethenogenes (strain 195)).